Here is a 305-residue protein sequence, read N- to C-terminus: Methionyl-tRNA formyltransferase (305 aa).

Position 108-111 (108-111) interacts with (6S)-5,6,7,8-tetrahydrofolate; it reads SLLP.

This sequence belongs to the Fmt family.

The catalysed reaction is L-methionyl-tRNA(fMet) + (6R)-10-formyltetrahydrofolate = N-formyl-L-methionyl-tRNA(fMet) + (6S)-5,6,7,8-tetrahydrofolate + H(+). Its function is as follows. Attaches a formyl group to the free amino group of methionyl-tRNA(fMet). The formyl group appears to play a dual role in the initiator identity of N-formylmethionyl-tRNA by promoting its recognition by IF2 and preventing the misappropriation of this tRNA by the elongation apparatus. The sequence is that of Methionyl-tRNA formyltransferase from Clavibacter sepedonicus (Clavibacter michiganensis subsp. sepedonicus).